A 635-amino-acid polypeptide reads, in one-letter code: MIHVTCNQEAFELPEGASAMDLANKMKQSHCFVGALINDQEKDLSTTLQDGDTVLFLTWDDPKGREIFLHTSAHILAQAVLRLWPSAQPTIGPVIDQGFYYDFANLSISEEDFPAIEAMAKTIAEEKFPISRQVFPDKEAALAYFSQNPFKAELIAELPEEVEISAYTQGEFLDLCRGPHLPSTAPVKAFKLLRTSSAYWKGDPSRESLIRIYGVSFPTTKELKEHLHQLEEAKKRDHRVLGTKLDLFSQQTCSAGMPFFHPRGMVVWNALVDYWKRLHQRAGYQQIQTPQLMNRELWEISGHWENYKENMYTLTVDEEDYAIKPMNCPGCMLYYKTQLHSYREFPLRIAEIGHVHRHELSGALSGLMRVRTFHQDDAHVFLTPEQVEEETLNILNLVSELYGTFGLEYHLELSTRPEQGTIGSDDLWELATEALKRALVKSQKPFIISPGEGAFYGPKIDIHVKDAINRTWQCGTIQLDMFLPERFDLKYTNAQGEKSTPIMLHRALFGSIERFLGILIEHFKGRFPLWLSPEHVRIITVADRHEARAQELAKHFSQMGIIVSVDSSNESVSKKIRNAQNMQVNYMITIGDKELETHLLAVRTRDNRVLNDIAVEQFSHVILEELRSLSLTPSL.

Positions 1 to 58 constitute a TGS domain; sequence MIHVTCNQEAFELPEGASAMDLANKMKQSHCFVGALINDQEKDLSTTLQDGDTVLFLT. The tract at residues 237–528 is catalytic; it reads DHRVLGTKLD…LIEHFKGRFP (292 aa). Residues Cys-328, His-379, and His-505 each coordinate Zn(2+).

Belongs to the class-II aminoacyl-tRNA synthetase family. Homodimer. It depends on Zn(2+) as a cofactor.

It localises to the cytoplasm. The catalysed reaction is tRNA(Thr) + L-threonine + ATP = L-threonyl-tRNA(Thr) + AMP + diphosphate + H(+). Functionally, catalyzes the attachment of threonine to tRNA(Thr) in a two-step reaction: L-threonine is first activated by ATP to form Thr-AMP and then transferred to the acceptor end of tRNA(Thr). Also edits incorrectly charged L-seryl-tRNA(Thr). In Chlamydia trachomatis serovar L2b (strain UCH-1/proctitis), this protein is Threonine--tRNA ligase.